Consider the following 825-residue polypeptide: ATP-dependent RNA helicase DBP7 (825 aa).

Residues 21 to 125 are disordered; sequence IKFTGGRWRE…AEPALPSNAP (105 aa). Positions 49–60 are enriched in low complexity; the sequence is DAVADDVGPAPA. Over residues 83–102 the composition is skewed to polar residues; the sequence is GPRSQHVSSRLFTSNPTPVT. A compositionally biased stretch (low complexity) spans 109–125; the sequence is TAPAEEPAEPALPSNAP. The Q motif signature appears at 131–160; the sequence is ATFAALGLSRRIAQHLSAKLELKAPTAIQH. Positions 164-373 constitute a Helicase ATP-binding domain; the sequence is PHLVTTDEDA…GEYSLEADKT (210 aa). An ATP-binding site is contributed by 177 to 184; that stretch reads AQTGSGKT. The DEAD box motif lies at 302–305; that stretch reads DEGD. The 226-residue stretch at 400–625 folds into the Helicase C-terminal domain; sequence QLKQSYLVVP…QLYDSVLQAG (226 aa). Disordered stretches follow at residues 457–495, 632–657, 676–713, and 764–825; these read EPKEAAAPPTPKKAPKDAGETPDTPPKETKPTKPVTNHT, LPPVTATNEDGQDTEQQKQLDSRKQT, SDASSQASNNSGKGFNSKKGASTKLGKPAPKSSDGATG, and IGAG…FNIG. 2 stretches are compositionally biased toward basic and acidic residues: residues 470–487 and 646–655; these read APKDAGETPDTPPKETKP and EQQKQLDSRK. Residues 676–686 are compositionally biased toward low complexity; the sequence is SDASSQASNNS. Residues 786–796 are compositionally biased toward basic and acidic residues; that stretch reads TKGDDGDGLDK.

This sequence belongs to the DEAD box helicase family. DDX31/DBP7 subfamily.

The protein resides in the nucleus. The protein localises to the nucleolus. The enzyme catalyses ATP + H2O = ADP + phosphate + H(+). ATP-binding RNA helicase involved in the biogenesis of 60S ribosomal subunits and is required for the normal formation of 25S and 5.8S rRNAs. This Pyricularia oryzae (strain 70-15 / ATCC MYA-4617 / FGSC 8958) (Rice blast fungus) protein is ATP-dependent RNA helicase DBP7 (DBP7).